The chain runs to 487 residues: MTHFIKGQWHTGKGHDVASSNPANGEIIWRGQTATAEQVNAAVDAAREAQFDWFILGFDARLKIVEAYRSQLEANKAELAETIAQETGKPQWETATEVAAMIGKIGLSASAYNKRTGTETNDTPAGRAVLRHKPHGVVAVFGPYNFPGHLPNGHIVPALLAGNSVVFKPSELTPKVAELMVTLWEKSGLPAGVLNLVQGEVDTGKALASHPQLDGLFFTGSSRTGHLLHQQYAGHPGKILALEMGGNNPLIIKGVADIKAAVHDILQSAYISSGQRCTCARRLYVEQGEQGDALVAKLVEAVKQIKVGPWNAQPQPFMGSMISEAAAKGMVAAQANLLSLGGVPLVELMHLQAGTGLVSPGLIDVTAVSELPDEEYFGPLLQLVRYSDFDQAIKLANQTRYGLSAGILADSREDYEYFLARIRAGIVNWNKQITGASGAAPFGGVGASGNHRASAFYAADYCAYPVASVEADAVSLPATLSPGLTLS.

The segment at 1–23 is disordered; it reads MTHFIKGQWHTGKGHDVASSNPA. Position 220–225 (220–225) interacts with NAD(+); sequence GSSRTG. Catalysis depends on residues Glu-243 and Cys-277.

The protein belongs to the aldehyde dehydrogenase family. AstD subfamily.

It carries out the reaction N-succinyl-L-glutamate 5-semialdehyde + NAD(+) + H2O = N-succinyl-L-glutamate + NADH + 2 H(+). It functions in the pathway amino-acid degradation; L-arginine degradation via AST pathway; L-glutamate and succinate from L-arginine: step 4/5. Functionally, catalyzes the NAD-dependent reduction of succinylglutamate semialdehyde into succinylglutamate. The protein is N-succinylglutamate 5-semialdehyde dehydrogenase of Shewanella oneidensis (strain ATCC 700550 / JCM 31522 / CIP 106686 / LMG 19005 / NCIMB 14063 / MR-1).